The chain runs to 416 residues: Inhibitor of growth protein 3 (416 aa).

3 disordered regions span residues 126-165 (LDTP…PEKK), 177-198 (SDAS…STNN), and 283-319 (QTLT…SSSL). Residues 136–152 (HHVHSHSSGEKRKHIPS) show a composition bias toward basic residues. Residues 156–165 (STTDHVPEKK) show a composition bias toward basic and acidic residues. Polar residues predominate over residues 177–187 (SDASKENTAGC). 3 stretches are compositionally biased toward low complexity: residues 189–198 (TNLSSSSTNN), 283–293 (QTLTSSATTDS), and 302–319 (NNKS…SSSL). The segment at 358 to 407 (PRYCICNQVSYGEMVGCDNQDCPIEWFHYGCVGLSEAPKGKWYCPQCTAA) adopts a PHD-type zinc-finger fold. Residues Cys361, Cys363, Cys374, Cys379, His385, Cys388, Cys401, and Cys404 each coordinate Zn(2+).

Belongs to the ING family. As to quaternary structure, interacts with H3K4me3 and to a lesser extent with H3K4me2. Component of the NuA4 histone acetyltransferase complex.

The protein resides in the nucleus. Component of the NuA4 histone acetyltransferase (HAT) complex which is involved in transcriptional activation of select genes principally by acetylation of nucleosomal histone H4 and H2A. This modification may both alter nucleosome - DNA interactions and promote interaction of the modified histones with other proteins which positively regulate transcription. NuA4 may also play a direct role in DNA repair when directly recruited to sites of DNA damage. This chain is Inhibitor of growth protein 3 (ing3), found in Xenopus laevis (African clawed frog).